The chain runs to 271 residues: Formamidopyrimidine-DNA glycosylase (271 aa).

The active-site Schiff-base intermediate with DNA is Pro-2. Residue Glu-3 is the Proton donor of the active site. Residue Lys-57 is the Proton donor; for beta-elimination activity of the active site. Positions 90, 109, and 151 each coordinate DNA. The FPG-type zinc finger occupies 236-270; the sequence is HVYSRGGETCTSCGNLLSEIRLGQRTTVFCGICQT. Residue Arg-260 is the Proton donor; for delta-elimination activity of the active site.

It belongs to the FPG family. In terms of assembly, monomer. Requires Zn(2+) as cofactor.

It carries out the reaction Hydrolysis of DNA containing ring-opened 7-methylguanine residues, releasing 2,6-diamino-4-hydroxy-5-(N-methyl)formamidopyrimidine.. It catalyses the reaction 2'-deoxyribonucleotide-(2'-deoxyribose 5'-phosphate)-2'-deoxyribonucleotide-DNA = a 3'-end 2'-deoxyribonucleotide-(2,3-dehydro-2,3-deoxyribose 5'-phosphate)-DNA + a 5'-end 5'-phospho-2'-deoxyribonucleoside-DNA + H(+). Its function is as follows. Involved in base excision repair of DNA damaged by oxidation or by mutagenic agents. Acts as a DNA glycosylase that recognizes and removes damaged bases. Has a preference for oxidized purines, such as 7,8-dihydro-8-oxoguanine (8-oxoG). Has AP (apurinic/apyrimidinic) lyase activity and introduces nicks in the DNA strand. Cleaves the DNA backbone by beta-delta elimination to generate a single-strand break at the site of the removed base with both 3'- and 5'-phosphates. This chain is Formamidopyrimidine-DNA glycosylase, found in Shewanella baltica (strain OS195).